We begin with the raw amino-acid sequence, 389 residues long: Mating-type protein MAT-1 (389 aa).

A DNA-binding region (alpha box) is located at residues 70–127 (KAKKALNAFVGFRCYYISIPHFKSWPMKKLSNLIGLLWETDPNKSLWSLMTKAWSAIR).

The protein belongs to the MATALPHA1 family.

The protein resides in the nucleus. Functionally, mating type proteins are sequence specific DNA-binding proteins that act as master switches in fungal differentiation by controlling gene expression in a cell type-specific fashion. Transcriptional activator that induces the transcription of alpha-specific genes. The chain is Mating-type protein MAT-1 (MAT1) from Alternaria alternata (Alternaria rot fungus).